A 122-amino-acid polypeptide reads, in one-letter code: uncharacterized protein (122 aa).

Its subcellular location is the mitochondrion. This is an uncharacterized protein from Arabidopsis thaliana (Mouse-ear cress).